A 313-amino-acid chain; its full sequence is Extracellular metalloprotease (313 aa).

The first 34 residues, 1 to 34 (MKLVPRFRKQWFAYLTVLCLALAAAVSFGVPAKA), serve as a signal peptide directing secretion. The interval 35-74 (AENPQTSVSNTGKEADATKNQTSKADQVSAPYEGTGKTSK) is disordered. The propeptide occupies 35 to 93 (AENPQTSVSNTGKEADATKNQTSKADQVSAPYEGTGKTSKSLYGGQTELEKNIQTLQPS). The segment covering 37–60 (NPQTSVSNTGKEADATKNQTSKAD) has biased composition (polar residues). C131 and C147 form a disulfide bridge. Active-site charge relay system residues include H146 and S267.

The protein belongs to the peptidase S1B family. As to quaternary structure, monomer.

It is found in the secreted. This Bacillus subtilis (strain 168) protein is Extracellular metalloprotease (mpr).